Reading from the N-terminus, the 486-residue chain is HTH-type transcriptional regulator PrpR (486 aa).

An HTH cro/C1-type domain is found at 22 to 76; sequence LRRLRQERGLTQVALAKALDLSTSYVNQLENDQRPITVPVLLLLTERFDLSAQYF. Residues 33 to 52 constitute a DNA-binding region (H-T-H motif); that stretch reads QVALAKALDLSTSYVNQLEN.

It belongs to the short-chain fatty acyl-CoA assimilation regulator (ScfR) family.

It participates in organic acid metabolism; propanoate degradation. The protein operates within steroid metabolism; cholesterol metabolism. Its function is as follows. Plays a key role in regulating expression of enzymes involved in the catabolism of short chain fatty acids (SCFA) via both the glyoxylate (acetyl degradation route) and the methylcitrate cycle (propionate degradation route). Required for intracellular growth in macrophages and for the assimilation of cholesterol-derived propionate. PrpR acts as a transcriptional activator of prpDC and icl genes when propionate is the main carbon source, and as a ramB repressor. During growth on propionate, PrpR also acts as a transcriptional repressor of dnaA, which encodes the DnaA initiator protein responsible for initiating chromosomal replication. It is possibly involved in the regulation of genes responsible for controlling cholesterol utilization. The sequence is that of HTH-type transcriptional regulator PrpR from Mycobacterium tuberculosis (strain ATCC 25618 / H37Rv).